The chain runs to 254 residues: Phosphoribosylaminoimidazole-succinocarboxamide synthase (254 aa).

It belongs to the SAICAR synthetase family.

It carries out the reaction 5-amino-1-(5-phospho-D-ribosyl)imidazole-4-carboxylate + L-aspartate + ATP = (2S)-2-[5-amino-1-(5-phospho-beta-D-ribosyl)imidazole-4-carboxamido]succinate + ADP + phosphate + 2 H(+). It functions in the pathway purine metabolism; IMP biosynthesis via de novo pathway; 5-amino-1-(5-phospho-D-ribosyl)imidazole-4-carboxamide from 5-amino-1-(5-phospho-D-ribosyl)imidazole-4-carboxylate: step 1/2. The protein is Phosphoribosylaminoimidazole-succinocarboxamide synthase of Brucella abortus (strain S19).